A 325-amino-acid chain; its full sequence is MPSSTAMAVGALSSSLLVTCCLMVALCSPSIPLEKLAQAPEQPGQEKREHASRDGPGRVNELGRPARDEGGSGRDWKSKSGRGLAGREPWSKLKQAWVSQGGGAKAGDLQVRPRGDTPQAEALAAAAQDAIGPELAPTPEPPEEYVYPDYRGKGCVDESGFVYAIGEKFAPGPSACPCLCTEEGPLCAQPECPRLHPRCIHVDTSQCCPQCKERKNYCEFRGKTYQTLEEFVVSPCERCRCEANGEVLCTVSACPQTECVDPVYEPDQCCPICKNGPNCFAETAVIPAGREVKTDECTICHCTYEEGTWRIERQAMCTRHECRQM.

The N-terminal stretch at 1–27 is a signal peptide; the sequence is MPSSTAMAVGALSSSLLVTCCLMVALC. The interval 37 to 121 is disordered; it reads AQAPEQPGQE…RPRGDTPQAE (85 aa). Composition is skewed to basic and acidic residues over residues 44–56 and 64–78; these read GQEK…RDGP and RPAR…DWKS. The short motif at 114-116 is the Mediates cell adhesion element; that stretch reads RGD. 2 consecutive VWFC domains span residues 153-212 and 216-274; these read KGCV…PQCK and NYCE…PICK.

Peripherally associated with AMPAR complex. AMPAR complex consists of an inner core made of 4 pore-forming GluA/GRIA proteins (GRIA1, GRIA2, GRIA3 and GRIA4) and 4 major auxiliary subunits arranged in a twofold symmetry. One of the two pairs of distinct binding sites is occupied either by CNIH2, CNIH3 or CACNG2, CACNG3. The other harbors CACNG2, CACNG3, CACNG4, CACNG8 or GSG1L. This inner core of AMPAR complex is complemented by outer core constituents binding directly to the GluA/GRIA proteins at sites distinct from the interaction sites of the inner core constituents. Outer core constituents include at least PRRT1, PRRT2, CKAMP44/SHISA9, FRRS1L and NRN1. The proteins of the inner and outer core serve as a platform for other, more peripherally associated AMPAR constituents, including VWC2. Alone or in combination, these auxiliary subunits control the gating and pharmacology of the AMPAR complex and profoundly impact their biogenesis and protein processing.

The protein resides in the secreted. It localises to the extracellular space. The protein localises to the extracellular matrix. Its subcellular location is the basement membrane. It is found in the synapse. Its function is as follows. BMP antagonist which may play a role in neural development. Promotes cell adhesion. The polypeptide is Brorin (VWC2) (Homo sapiens (Human)).